Reading from the N-terminus, the 397-residue chain is MFQKVDAYAGDPILSLMERFKEDPRSDKVNLSIGLYYNDDGIIPQLQAVAEAEARLNAEPHGASLYLPMEGFSGYRQAIAPLLFGAEHTALKQNRIASIQTVGGSGALKVGADFLKRYFPESHVWVSDPTWENHIAIFEGAGFEVSTYPWFDKATNGVRFENLLAMLQTLPARDIVLLHPCCHNPTGADLTPAQWDRVVEVLKARQLIPFLDIAYQGFGGGLEEDAYAIRAIASAGMPMLVSNSFSKIFSLYGERVGGLSVVCEDSETAGRVLGQLKATVRRNYSSPPSFGAQVVATVLNDAALKATWQAEVDAMRAHILTMRQALVDALQQVAPGSKVDYLLKQRGMFSYTGFSAAQVDRLRDEFGVYLIASGRMRVAGLNSRNVQQVAKAFVAVM.

Positions 34, 66, 131, and 184 each coordinate substrate. An N6-(pyridoxal phosphate)lysine modification is found at Lys247. Arg375 is a binding site for substrate.

It belongs to the class-I pyridoxal-phosphate-dependent aminotransferase family. In terms of assembly, homodimer. Pyridoxal 5'-phosphate is required as a cofactor.

It catalyses the reaction L-tyrosine + 2-oxoglutarate = 3-(4-hydroxyphenyl)pyruvate + L-glutamate. It carries out the reaction 4-methylsulfanyl-2-oxobutanoate + L-tyrosine = 3-(4-hydroxyphenyl)pyruvate + L-methionine. The catalysed reaction is an aromatic L-alpha-amino acid + 2-oxoglutarate = an aromatic oxo-acid + L-glutamate. The enzyme catalyses L-aspartate + 2-oxoglutarate = oxaloacetate + L-glutamate. Its pathway is amino-acid biosynthesis; L-methionine biosynthesis via salvage pathway; L-methionine from S-methyl-5-thio-alpha-D-ribose 1-phosphate: step 6/6. Its activity is regulated as follows. Inhibited by malate and nitrotyrosine by approximately 20% at the higher concentration. At 100 uM, canaline and carboxymethoxylamine inhibit aminotransferase activity by 35 and 70%, respectively. Addition of 1.0 mM carboxymethoxylamine lead to a complete inhibition of the aminotransferase activity. Functionally, catalyzes the formation of methionine from 2-keto-4-methylthiobutyrate (KMTB) primarily using aromatic amino acids (tyrosine, phenylalanine and tryptophan) or glutamate as the amino donors. Histidine, leucine, asparagine, or arginine are also functional amino donors but to a lesser extent. Can also use alpha-ketoglutarate, oxaloacetate and pyruvate as the amino acceptors. The protein is Tyrosine aminotransferase (tyrB) of Klebsiella pneumoniae.